The chain runs to 361 residues: 3-dehydroquinate synthase (361 aa).

The protein belongs to the archaeal-type DHQ synthase family.

The enzyme catalyses 2-amino-2,3,7-trideoxy-D-lyxo-hept-6-ulosonate + NAD(+) + H2O = 3-dehydroquinate + NH4(+) + NADH + H(+). In terms of biological role, catalyzes the oxidative deamination and cyclization of 2-amino-3,7-dideoxy-D-threo-hept-6-ulosonic acid (ADH) to yield 3-dehydroquinate (DHQ), which is fed into the canonical shikimic pathway of aromatic amino acid biosynthesis. The polypeptide is 3-dehydroquinate synthase (Methanococcus maripaludis (strain DSM 14266 / JCM 13030 / NBRC 101832 / S2 / LL)).